The chain runs to 490 residues: Cytochrome P450 2C12, female-specific (490 aa).

Cys-435 provides a ligand contact to heme.

Belongs to the cytochrome P450 family. Requires heme as cofactor.

It is found in the endoplasmic reticulum membrane. Its subcellular location is the microsome membrane. The enzyme catalyses an organic molecule + reduced [NADPH--hemoprotein reductase] + O2 = an alcohol + oxidized [NADPH--hemoprotein reductase] + H2O + H(+). Its function is as follows. This P450 is active in 15-beta-hydroxylation of steroid sulfates. This chain is Cytochrome P450 2C12, female-specific (Cyp2c12), found in Rattus norvegicus (Rat).